A 108-amino-acid polypeptide reads, in one-letter code: Nucleoid-associated protein Pmen_2646 (108 aa).

A disordered region spans residues 1–25 (MMKGGMAGLMKQAQQMQEKMQKMQE).

This sequence belongs to the YbaB/EbfC family. As to quaternary structure, homodimer.

It is found in the cytoplasm. The protein resides in the nucleoid. Binds to DNA and alters its conformation. May be involved in regulation of gene expression, nucleoid organization and DNA protection. The protein is Nucleoid-associated protein Pmen_2646 of Ectopseudomonas mendocina (strain ymp) (Pseudomonas mendocina).